Consider the following 252-residue polypeptide: Large ribosomal subunit protein uL4 (252 aa).

The protein belongs to the universal ribosomal protein uL4 family. Part of the 50S ribosomal subunit.

One of the primary rRNA binding proteins, this protein initially binds near the 5'-end of the 23S rRNA. It is important during the early stages of 50S assembly. It makes multiple contacts with different domains of the 23S rRNA in the assembled 50S subunit and ribosome. In terms of biological role, forms part of the polypeptide exit tunnel. This is Large ribosomal subunit protein uL4 from Methanococcus maripaludis (strain C7 / ATCC BAA-1331).